Consider the following 115-residue polypeptide: NADH-ubiquinone oxidoreductase chain 3 (115 aa).

Helical transmembrane passes span 3–23 (LVMA…IAFW), 55–75 (FFLV…LLPL), and 86–106 (TMLI…AYEW).

It belongs to the complex I subunit 3 family. Core subunit of respiratory chain NADH dehydrogenase (Complex I) which is composed of 45 different subunits. Interacts with TMEM186. Interacts with TMEM242.

The protein resides in the mitochondrion inner membrane. The catalysed reaction is a ubiquinone + NADH + 5 H(+)(in) = a ubiquinol + NAD(+) + 4 H(+)(out). Its function is as follows. Core subunit of the mitochondrial membrane respiratory chain NADH dehydrogenase (Complex I) which catalyzes electron transfer from NADH through the respiratory chain, using ubiquinone as an electron acceptor. Essential for the catalytic activity of complex I. This is NADH-ubiquinone oxidoreductase chain 3 from Hippopotamus amphibius (Hippopotamus).